We begin with the raw amino-acid sequence, 339 residues long: Adenylosuccinate synthetase (339 aa).

Residues 12-18 and 42-44 contribute to the GTP site; these read GDEGKGS and GHS. Asp13 functions as the Proton acceptor in the catalytic mechanism. Asp13 and Gly42 together coordinate Mg(2+). IMP is bound by residues 13–16, 40–43, Thr127, Arg141, Gln179, Thr194, and Arg256; these read DEGK and NAGH. Catalysis depends on His43, which acts as the Proton donor. A substrate-binding site is contributed by 252 to 258; it reads TVTGRRR. Residues Arg258, 284-286, and 324-326 contribute to the GTP site; these read MLD and KTG.

Belongs to the adenylosuccinate synthetase family. In terms of assembly, homodimer. Requires Mg(2+) as cofactor.

The protein resides in the cytoplasm. It catalyses the reaction IMP + L-aspartate + GTP = N(6)-(1,2-dicarboxyethyl)-AMP + GDP + phosphate + 2 H(+). It participates in purine metabolism; AMP biosynthesis via de novo pathway; AMP from IMP: step 1/2. Plays an important role in the de novo pathway of purine nucleotide biosynthesis. Catalyzes the first committed step in the biosynthesis of AMP from IMP. This is Adenylosuccinate synthetase from Pyrococcus sp. (strain ST700).